A 129-amino-acid chain; its full sequence is Phosphoribosyl-AMP cyclohydrolase (129 aa).

Asp86 is a Mg(2+) binding site. A Zn(2+)-binding site is contributed by Cys87. The Mg(2+) site is built by Asp88 and Asp90. The Zn(2+) site is built by Cys104 and Cys111.

Belongs to the PRA-CH family. As to quaternary structure, homodimer. Mg(2+) is required as a cofactor. Zn(2+) serves as cofactor.

Its subcellular location is the cytoplasm. It carries out the reaction 1-(5-phospho-beta-D-ribosyl)-5'-AMP + H2O = 1-(5-phospho-beta-D-ribosyl)-5-[(5-phospho-beta-D-ribosylamino)methylideneamino]imidazole-4-carboxamide. It participates in amino-acid biosynthesis; L-histidine biosynthesis; L-histidine from 5-phospho-alpha-D-ribose 1-diphosphate: step 3/9. Catalyzes the hydrolysis of the adenine ring of phosphoribosyl-AMP. The chain is Phosphoribosyl-AMP cyclohydrolase from Ignicoccus hospitalis (strain KIN4/I / DSM 18386 / JCM 14125).